The sequence spans 133 residues: UPF0102 protein Plav_3586 (133 aa).

This sequence belongs to the UPF0102 family.

In Parvibaculum lavamentivorans (strain DS-1 / DSM 13023 / NCIMB 13966), this protein is UPF0102 protein Plav_3586.